A 144-amino-acid chain; its full sequence is Large ribosomal subunit protein uL16 (144 aa).

This sequence belongs to the universal ribosomal protein uL16 family. In terms of assembly, part of the 50S ribosomal subunit.

Functionally, binds 23S rRNA and is also seen to make contacts with the A and possibly P site tRNAs. The chain is Large ribosomal subunit protein uL16 from Porphyromonas gingivalis (strain ATCC 33277 / DSM 20709 / CIP 103683 / JCM 12257 / NCTC 11834 / 2561).